The following is a 930-amino-acid chain: A disintegrin and metalloproteinase with thrombospondin motifs 5 (930 aa).

The signal sequence occupies residues M1–P16. Positions L17–R261 are excised as a propeptide. 2 disordered regions span residues A24 to R69 and R206 to R231. Positions A31 to Q42 are enriched in low complexity. The span at R46–G59 shows a compositional bias: basic and acidic residues. The Cysteine switch signature appears at A207–S214. C209 lines the Zn(2+) pocket. One can recognise a Peptidase M12B domain in the interval R267–P476. Intrachain disulfides connect C342-C394, C371-C376, C388-C471, C426-C455, C497-C519, C508-C529, C514-C548, and C542-C553. H410 serves as a coordination point for Zn(2+). E411 is a catalytic residue. Residues H414 and H420 each contribute to the Zn(2+) site. One can recognise a Disintegrin domain in the interval E485 to S566. An N-linked (GlcNAc...) asparagine glycan is attached at N498. The TSP type-1 1 domain maps to H567–P622. C-linked (Man) tryptophan glycans are attached at residues W570 and W573. Cystine bridges form between C579-C616, C583-C621, and C594-C606. A glycan (O-linked (Fuc...) serine) is linked at S582. N-linked (GlcNAc...) asparagine glycans are attached at residues N728, N802, and N807. The spacer stretch occupies residues T732 to T874. The region spanning S875–K929 is the TSP type-1 2 domain.

Zn(2+) is required as a cofactor. The precursor is cleaved by furin and PCSK7 outside of the cell. Post-translationally, glycosylated. Can be O-fucosylated by POFUT2 on a serine or a threonine residue found within the consensus sequence C1-X(2)-(S/T)-C2-G of the TSP type-1 repeat domains where C1 and C2 are the first and second cysteine residue of the repeat, respectively. Fucosylated repeats can then be further glycosylated by the addition of a beta-1,3-glucose residue by the glucosyltransferase, B3GALTL. Fucosylation mediates the efficient secretion of ADAMTS family members. Can also be C-glycosylated with one or two mannose molecules on tryptophan residues within the consensus sequence W-X-X-W of the TPRs, and N-glycosylated. These other glycosylations can also facilitate secretion. Expressed at low level in placenta primarily but also detected in heart and brain, cervix, uterus, bladder, esophagus, rib cartilage, chondroblastoma, fibrous tissue and a joint capsule from an arthritic patient.

Its subcellular location is the secreted. It localises to the extracellular space. The protein localises to the extracellular matrix. Functionally, metalloproteinase that plays an important role in connective tissue organization, development, inflammation and cell migration. Extracellular matrix (ECM) degrading enzyme that show proteolytic activity toward the hyalectan group of chondroitin sulfate proteoglycans (CSPGs) including ACAN, VCAN, BCAN and NCAN. Cleavage within the hyalectans occurs at Glu-Xaa recognition motifs. Plays a role in embryonic development, including limb and cardiac morphogenesis, and skeletal muscle development through its VCAN remodeling properties. Cleaves VCAN in the pericellular matrix surrounding myoblasts, facilitating myoblast contact and fusion which is required for skeletal muscle development and regeneration. Participates in development of brown adipose tissue and browning of white adipose tissue. Plays an important role for T-lymphocyte migration from draining lymph nodes following viral infection. This Homo sapiens (Human) protein is A disintegrin and metalloproteinase with thrombospondin motifs 5 (ADAMTS5).